A 226-amino-acid chain; its full sequence is PKHD-type hydroxylase Abu_0724 (226 aa).

The region spanning 78–178 is the Fe2OG dioxygenase domain; that stretch reads HIISPFFNKY…RMVSFMWIQS (101 aa). Fe cation contacts are provided by His-96, Asp-98, and His-159. Arg-169 lines the 2-oxoglutarate pocket.

The cofactor is Fe(2+). Requires L-ascorbate as cofactor.

This Aliarcobacter butzleri (strain RM4018) (Arcobacter butzleri) protein is PKHD-type hydroxylase Abu_0724.